Reading from the N-terminus, the 451-residue chain is DNA double-strand break repair protein Mre11 (451 aa).

Residues D8, H10, D49, and N84 each contribute to the Mn(2+) site. The active-site Proton donor is H85. Residues H168, H198, and H200 each contribute to the Mn(2+) site. Residues 374–451 (REDNPPDLGD…GRPSLDRWIG (78 aa)) form a disordered region. A compositionally biased stretch (acidic residues) spans 396 to 416 (GSEESSEEPEESDGEEVGLEV).

It belongs to the MRE11/RAD32 family. Homodimer. Forms a heterotetramer composed of two Mre11 subunits and two Rad50 subunits. It depends on Mn(2+) as a cofactor.

With respect to regulation, nuclease activity is regulated by Rad50. In terms of biological role, part of the Rad50/Mre11 complex, which is involved in the early steps of DNA double-strand break (DSB) repair. The complex may facilitate opening of the processed DNA ends to aid in the recruitment of HerA and NurA. Mre11 binds to DSB ends and has both double-stranded 3'-5' exonuclease activity and single-stranded endonuclease activity. The sequence is that of DNA double-strand break repair protein Mre11 from Methanopyrus kandleri (strain AV19 / DSM 6324 / JCM 9639 / NBRC 100938).